A 544-amino-acid chain; its full sequence is Dihydrolipoyllysine-residue acetyltransferase component of pyruvate dehydrogenase complex (544 aa).

Lipoyl-binding domains lie at 1-76 (MYEF…VTID) and 113-188 (IYDF…VLIG). N6-lipoyllysine occurs at positions 42 and 154. One can recognise a Peripheral subunit-binding (PSBD) domain in the interval 242–279 (LASPVARKLASDLGVDIATIKGSGEQGRVMKDDVQNSK). The active site involves His516.

Belongs to the 2-oxoacid dehydrogenase family. Forms a 24-polypeptide structural core with octahedral symmetry. The cofactor is (R)-lipoate.

The catalysed reaction is N(6)-[(R)-dihydrolipoyl]-L-lysyl-[protein] + acetyl-CoA = N(6)-[(R)-S(8)-acetyldihydrolipoyl]-L-lysyl-[protein] + CoA. Functionally, the pyruvate dehydrogenase complex catalyzes the overall conversion of pyruvate to acetyl-CoA and CO(2). It contains multiple copies of three enzymatic components: pyruvate dehydrogenase (E1), dihydrolipoamide acetyltransferase (E2) and lipoamide dehydrogenase (E3). This chain is Dihydrolipoyllysine-residue acetyltransferase component of pyruvate dehydrogenase complex (pdhC), found in Acholeplasma laidlawii.